Here is a 764-residue protein sequence, read N- to C-terminus: Putative wall-associated receptor kinase-like 13 (764 aa).

Residues 1–26 form the signal peptide; it reads MRGNKNYYFLSLLYFLSLPILHFSSC. Residues 27–379 lie on the Extracellular side of the membrane; the sequence is THKCGDIQIP…HRCIDYHIPE (353 aa). N-linked (GlcNAc...) asparagine glycosylation is found at Asn78, Asn114, Asn121, Asn164, Asn233, Asn238, Asn259, and Asn283. The segment at 308–372 is atypical EGF-like; it reads CTCDNHIASG…CINTSGGHRC (65 aa). Cystine bridges form between Cys310/Cys323, Cys345/Cys363, and Cys352/Cys372. A glycan (N-linked (GlcNAc...) asparagine) is linked at Asn365. The helical transmembrane segment at 380-400 threads the bilayer; that stretch reads VMLGLGAGFFVLIVGGGIWWW. The Cytoplasmic segment spans residues 401-764; it reads RKLLRKRRMT…SGSTEIARSM (364 aa). The region spanning 454–728 is the Protein kinase domain; it reads FNDNRVIGQG…REVSTALERI (275 aa). ATP contacts are provided by residues 460–468 and Lys482; that span reads IGQGGQGTV. Residue Tyr527 is modified to Phosphotyrosine. The active-site Proton acceptor is Asp579. 2 positions are modified to phosphothreonine: Thr613 and Thr618. Tyr626 is modified (phosphotyrosine).

The protein belongs to the protein kinase superfamily. Ser/Thr protein kinase family.

It localises to the membrane. The catalysed reaction is L-seryl-[protein] + ATP = O-phospho-L-seryl-[protein] + ADP + H(+). It carries out the reaction L-threonyl-[protein] + ATP = O-phospho-L-threonyl-[protein] + ADP + H(+). In terms of biological role, putative serine/threonine-protein kinase that may function as a signaling receptor of extracellular matrix component. The polypeptide is Putative wall-associated receptor kinase-like 13 (WAKL13) (Arabidopsis thaliana (Mouse-ear cress)).